Here is a 273-residue protein sequence, read N- to C-terminus: Anthocyanin regulatory C1 protein (273 aa).

HTH myb-type domains are found at residues 9–65 and 66–116; these read KEGV…RPNI and RRGN…GRRA. DNA-binding regions (H-T-H motif) lie at residues 37–61 and 89–112; these read WREV…LNYL and WSLI…NSTL. 2 disordered regions span residues 137–164 and 196–220; these read ATPA…SAGT and AGET…SDDC. Gly residues predominate over residues 204–214; it reads AGGGGGGGGEA.

Its subcellular location is the nucleus. Controls the expression of genes involved in anthocyanin biosynthesis. Regulates the expression of at least 3 structural genes: chalcone synthase, dihydroflavonol reductase and flavonol O(3) glucosyltransferase. C1 acts as a trans-acting factor. The polypeptide is Anthocyanin regulatory C1 protein (C1) (Zea mays (Maize)).